Consider the following 573-residue polypeptide: Probable cytochrome c oxidase subunit 1 (573 aa).

Residues 40-60 (IGIMYCVACISFFFIGGLLAL) form a helical membrane-spanning segment. His86 provides a ligand contact to Fe(II)-heme a. The next 6 membrane-spanning stretches (helical) occupy residues 89 to 109 (IMLL…VLPL), 121 to 141 (LNAF…AGFI), 170 to 190 (LWIM…VNMI), 213 to 233 (IMVT…ALFG), 258 to 278 (LFWF…FGIV), and 290 to 310 (IFGY…SVAV). 2 residues coordinate Cu cation: His264 and Tyr268. Residues 264–268 (HPEVY) constitute a cross-link (1'-histidyl-3'-tyrosine (His-Tyr)). Cu cation-binding residues include His313 and His314. 2 consecutive transmembrane segments (helical) span residues 315 to 335 (MFAT…LIAV) and 359 to 379 (MLFS…GVLL). His397 contacts heme a3. Helical transmembrane passes span 398-418 (FHYV…YFWF), 433-453 (LHFW…HWLG), and 476-496 (VSTI…WNVF). His399 is a Fe(II)-heme a binding site.

The protein belongs to the heme-copper respiratory oxidase family.

The protein resides in the cell membrane. It carries out the reaction 4 Fe(II)-[cytochrome c] + O2 + 8 H(+)(in) = 4 Fe(III)-[cytochrome c] + 2 H2O + 4 H(+)(out). Its pathway is energy metabolism; oxidative phosphorylation. In terms of biological role, cytochrome c oxidase is the component of the respiratory chain that catalyzes the reduction of oxygen to water. Subunits 1-3 form the functional core of the enzyme complex. CO I is the catalytic subunit of the enzyme. Electrons originating in cytochrome c are transferred via the copper A center of subunit 2 and heme A of subunit 1 to the bimetallic center formed by heme A3 and copper B. The polypeptide is Probable cytochrome c oxidase subunit 1 (ctaD) (Mycobacterium bovis (strain ATCC BAA-935 / AF2122/97)).